The chain runs to 195 residues: Large ribosomal subunit protein uL18 (195 aa).

The protein belongs to the universal ribosomal protein uL18 family. As to quaternary structure, part of the 50S ribosomal subunit. Contacts the 5S and 23S rRNAs.

This is one of the proteins that bind and probably mediate the attachment of the 5S RNA into the large ribosomal subunit, where it forms part of the central protuberance. This Korarchaeum cryptofilum (strain OPF8) protein is Large ribosomal subunit protein uL18.